Here is a 508-residue protein sequence, read N- to C-terminus: Protein NODULATION SIGNALING PATHWAY 2 (508 aa).

A disordered region spans residues 75 to 98 (ITTTTTTTTTTDEEEEEMETTTTT). The region spanning 108–500 (VGDDSKGLKL…RRLLSASLWT (393 aa)) is the GRAS domain. Residues 115–190 (LKLVHLLMAG…NNHHHHNNNK (76 aa)) are leucine repeat I (LRI). The VHIID stretch occupies residues 209–273 (FQLLQDMSPY…NNGPHLRITA (65 aa)). A VHIID motif is present at residues 240 to 244 (VHVID). Positions 289–321 (ETGRRLTSFAASLGQPFSFHHCRLDSDETFRPS) are leucine repeat II (LRII). Residues 331-422 (LVFNCMLNLP…RVFFGPRIAG (92 aa)) are PFYRE. The segment at 425 to 500 (GRIYRTGGEE…RRLLSASLWT (76 aa)) is SAW.

Belongs to the GRAS family. Interacts with RAM1. Interacts with IPN2 and RAD1. As to expression, expressed in roots, shoots and leaves.

It is found in the nucleus membrane. It localises to the endoplasmic reticulum. Transcriptional regulator essential for Nod-factor-induced gene expression. Acts downstream of calcium spiking and DMI3, a calcium/calmodulin-dependent protein kinase (CCaMK). Transcription factor involved in the control of strigolactone biosynthesis in roots through the activation of the beta-carotene isomerase D27, which participates in a pathway leading to biosynthesis of strigolactones. This chain is Protein NODULATION SIGNALING PATHWAY 2, found in Medicago truncatula (Barrel medic).